Reading from the N-terminus, the 266-residue chain is Tryptophan synthase alpha chain (266 aa).

Residues Glu-47 and Asp-58 each act as proton acceptor in the active site.

The protein belongs to the TrpA family. Tetramer of two alpha and two beta chains.

The protein localises to the plastid. The protein resides in the chloroplast. The enzyme catalyses (1S,2R)-1-C-(indol-3-yl)glycerol 3-phosphate + L-serine = D-glyceraldehyde 3-phosphate + L-tryptophan + H2O. It functions in the pathway amino-acid biosynthesis; L-tryptophan biosynthesis; L-tryptophan from chorismate: step 5/5. Its function is as follows. The alpha subunit is responsible for the aldol cleavage of indoleglycerol phosphate to indole and glyceraldehyde 3-phosphate. The chain is Tryptophan synthase alpha chain from Cyanidium caldarium (Red alga).